The primary structure comprises 358 residues: uncharacterized protein (358 aa).

Residues methionine 1 to arginine 47 are disordered. Positions asparagine 18–glycine 29 are enriched in basic residues.

It to M.leprae ML2427.

This is an uncharacterized protein from Mycobacterium tuberculosis (strain CDC 1551 / Oshkosh).